The following is an 85-amino-acid chain: Cell division topological specificity factor (85 aa).

It belongs to the MinE family.

Its function is as follows. Prevents the cell division inhibition by proteins MinC and MinD at internal division sites while permitting inhibition at polar sites. This ensures cell division at the proper site by restricting the formation of a division septum at the midpoint of the long axis of the cell. This Xylella fastidiosa (strain M23) protein is Cell division topological specificity factor.